The sequence spans 205 residues: Ephrin-A1 (205 aa).

The N-terminal stretch at 1-18 (MEFLWAPLLGLCCSLAAA) is a signal peptide. The Ephrin RBD domain occupies 19–151 (DRHTVFWNSS…RLKVTVSGKI (133 aa)). Asparagine 26 is a glycosylation site (N-linked (GlcNAc...) asparagine). 2 disulfide bridges follow: cysteine 51/cysteine 92 and cysteine 80/cysteine 140. The GPI-anchor amidated serine moiety is linked to residue serine 182. The propeptide at 183–205 (AAPRLFPLAWTVLLLPLLLLQTP) is removed in mature form.

This sequence belongs to the ephrin family. Monomer. Homodimer. Forms heterodimers with EPHA2. Binds to the receptor tyrosine kinases EPHA2, EPHA3, EPHA4, EPHA5, EPHA6 and EPHA7. Also binds with low affinity to EPHA1. Undergoes proteolysis by a metalloprotease to give rise to a soluble monomeric form. In terms of processing, N-Glycosylation is required for binding to EPHA2 receptor and inducing its internalization. As to expression, brain. Down-regulated in primary glioma tissues compared to the normal tissues. The soluble monomeric form is expressed in the glioblastoma multiforme (GBM) and breast cancer cells (at protein level).

It is found in the cell membrane. The protein resides in the secreted. Its function is as follows. Cell surface GPI-bound ligand for Eph receptors, a family of receptor tyrosine kinases which are crucial for migration, repulsion and adhesion during neuronal, vascular and epithelial development. Binds promiscuously Eph receptors residing on adjacent cells, leading to contact-dependent bidirectional signaling into neighboring cells. Plays an important role in angiogenesis and tumor neovascularization. The recruitment of VAV2, VAV3 and PI3-kinase p85 subunit by phosphorylated EPHA2 is critical for EFNA1-induced RAC1 GTPase activation and vascular endothelial cell migration and assembly. Exerts anti-oncogenic effects in tumor cells through activation and down-regulation of EPHA2. Activates EPHA2 by inducing tyrosine phosphorylation which leads to its internalization and degradation. Acts as a negative regulator in the tumorigenesis of gliomas by down-regulating EPHA2 and FAK. Can evoke collapse of embryonic neuronal growth cone and regulates dendritic spine morphogenesis. The sequence is that of Ephrin-A1 (EFNA1) from Homo sapiens (Human).